We begin with the raw amino-acid sequence, 285 residues long: Phasyl DNA replicon protein arp (285 aa).

Its function is as follows. Essential for autonomous replication of the phasyl DNA replicon. The protein is Phasyl DNA replicon protein arp (arp) of Escherichia coli.